A 350-amino-acid polypeptide reads, in one-letter code: MTNLQTFELPTEVTGCAADISLGRALIQAWQKDGIFQIKTDSEQDRKTQEAMAASKQFCKEPLTFKSSCVSDLTYSGYVASGEEVTAGKPDFPEIFTVCKDLSVGDQRVKAGWPCHGPVPWPNNTYQKSMKTFMEELGLAGERLLKLTALGFELPINTFTDLTRDGWHHMRVLRFPPQTSTLSRGIGAHTDYGLLVIAAQDDVGGLYIRPPVEGEKRNRNWLPGESSAGMFEHDEPWTFVTPTPGVWTVFPGDILQFMTGGQLLSTPHKVKLNTRERFACAYFHEPNFEASAYPLFEPSANERIHYGEHFTNMFMRCYPDRITTQRINKENRLAHLEDLKKYSDTRATGS.

Residues G166–P286 enclose the Fe2OG dioxygenase domain. Positions 189 and 268 each coordinate Fe cation.

It belongs to the iron/ascorbate-dependent oxidoreductase family. As to quaternary structure, monomer. Fe(2+) is required as a cofactor.

It catalyses the reaction 2-oxoglutarate + O2 + 2 H(+) = ethene + 3 CO2 + H2O. The catalysed reaction is L-arginine + 2-oxoglutarate + O2 = guanidine + L-glutamate 5-semialdehyde + succinate + CO2. It participates in alkene biosynthesis; ethylene biosynthesis via 2-oxoglutarate. Its activity is regulated as follows. Activated by catalase. Inhibited by chelating reagents such as EDTA and Tiron (4,5-dihydroxy-1,3-benzene disulphonic acid), and by DTNB (5,5'-dithio-bis-2-nitrobenzoate) and hydrogen peroxide. In terms of biological role, simultaneously catalyzes two reactions, namely formation of ethylene and of succinate from 2-oxoglutarate, with a molar ratio of 2:1. This Pseudomonas savastanoi pv. phaseolicola (Pseudomonas syringae pv. phaseolicola) protein is 2-oxoglutarate-dependent ethylene/succinate-forming enzyme (efe).